Reading from the N-terminus, the 359-residue chain is Olfactory receptor 5T2 (359 aa).

The Extracellular segment spans residues M1–T64. The N-linked (GlcNAc...) asparagine glycan is linked to N44. The chain crosses the membrane as a helical span at residues I65–I85. Topologically, residues L86–Q93 are cytoplasmic. A helical transmembrane segment spans residues L94–S114. The Extracellular portion of the chain corresponds to V115–A138. The helical transmembrane segment at Q139–Y159 threads the bilayer. Residues D160–R178 are Cytoplasmic-facing. A helical membrane pass occupies residues V179–T199. At V200 to Q235 the chain is on the extracellular side. A helical transmembrane segment spans residues L236–S256. Residues Y257–V276 lie on the Cytoplasmic side of the membrane. Residues F277–M297 traverse the membrane as a helical segment. Residues Y298–D310 lie on the Extracellular side of the membrane. Residues M311 to L331 traverse the membrane as a helical segment. Over R332–K359 the chain is Cytoplasmic.

It belongs to the G-protein coupled receptor 1 family.

It is found in the cell membrane. Functionally, odorant receptor. The chain is Olfactory receptor 5T2 (OR5T2) from Homo sapiens (Human).